A 902-amino-acid chain; its full sequence is Calcium-activated chloride channel regulator 3A-1 (902 aa).

The first 21 residues, 1–21 (MVPGLQVLLFLTLHLLQNTES), serve as a signal peptide directing secretion. The metalloprotease domain stretch occupies residues 45–199 (DERLIPSIKE…RITGTNVVHN (155 aa)). N-linked (GlcNAc...) asparagine glycosylation occurs at N75. H155 lines the Zn(2+) pocket. Residue E156 is part of the active site. Residues H159 and D166 each contribute to the Zn(2+) site. The VWFA domain maps to 308–476 (VVCLVLDKSG…NSLIDAFSRI (169 aa)). Residues N504, N515, N630, N687, N697, N809, and N814 are each glycosylated (N-linked (GlcNAc...) asparagine).

It belongs to the CLCR family. Part of a complex composed of complement component C3, CLCA1/CLCA3, A2ML1/OH and ALB/serum albumin. Post-translationally, glycosylated. In terms of processing, the 130-kDa product is autoproteolytically processed by the metalloprotease domain and yields two subunits, a 90-kDa protein and a group of 32- to 38-kDa proteins. The cleavage is necessary for calcium-activated chloride channel (CaCC) activation activity. As to expression, highly expressed in skin and spleen, and at lower levels in kidney and liver. Also detected in lung and brain. Not detected in lung or brain. In lung, localizes to respiratory epithelia of the bronchi and trachea and the submucosal glands.

It localises to the cell membrane. Plays a role in modulating chloride current across the plasma membrane in a calcium-dependent manner. In Mus musculus (Mouse), this protein is Calcium-activated chloride channel regulator 3A-1.